We begin with the raw amino-acid sequence, 157 residues long: ATP synthase subunit delta (157 aa).

This sequence belongs to the ATPase delta chain family. In terms of assembly, F-type ATPases have 2 components, F(1) - the catalytic core - and F(0) - the membrane proton channel. F(1) has five subunits: alpha(3), beta(3), gamma(1), delta(1), epsilon(1). F(0) has three main subunits: a(1), b(2) and c(10-14). The alpha and beta chains form an alternating ring which encloses part of the gamma chain. F(1) is attached to F(0) by a central stalk formed by the gamma and epsilon chains, while a peripheral stalk is formed by the delta and b chains.

It localises to the cell membrane. Its function is as follows. F(1)F(0) ATP synthase produces ATP from ADP in the presence of a proton or sodium gradient. F-type ATPases consist of two structural domains, F(1) containing the extramembraneous catalytic core and F(0) containing the membrane proton channel, linked together by a central stalk and a peripheral stalk. During catalysis, ATP synthesis in the catalytic domain of F(1) is coupled via a rotary mechanism of the central stalk subunits to proton translocation. This protein is part of the stalk that links CF(0) to CF(1). It either transmits conformational changes from CF(0) to CF(1) or is implicated in proton conduction. In Chloroflexus aurantiacus (strain ATCC 29364 / DSM 637 / Y-400-fl), this protein is ATP synthase subunit delta.